Consider the following 548-residue polypeptide: MFS-rype transporter paaT (548 aa).

The span at 1–10 (MEAPRSDQAH) shows a compositional bias: basic and acidic residues. The interval 1-32 (MEAPRSDQAHTDATTPMEAIRTTSLGTNNYGP) is disordered. Positions 21 to 30 (RTTSLGTNNY) are enriched in polar residues. Residues Asn70 and Asn93 are each glycosylated (N-linked (GlcNAc...) asparagine). 12 consecutive transmembrane segments (helical) span residues 100–120 (WYCTMVVAFTCFVVAFCSSVI), 139–159 (LVVITVFVIGFGLGPMVFAPM), 174–194 (ALAVIFVIPCAVSKNIGTLIV), 197–217 (LIDGIAFSAPMTLVGGTLADL), 224–244 (GVPMAAFSAAPFIGPAIGPLV), 256–276 (WLYWIQLILAFVAWVMITFTV), 332–352 (IVLFISLYMSVIYGLLYMFFV), 370–390 (GLMFIPLAIGVIFSACCAPFV), 411–431 (LIPMMWACWCIPSGLFVFAWT), 436–456 (LHWMGPAMGGFLIGVGVILLY), 471–493 (AASALAAKTFIRSIWGACTVLFT), and 505–525 (ASTLLAFIGLACCAIPYVFYF). Positions 258–269 (YWIQLILAFVAW) match the Peroxisomal targeting signal motif.

Belongs to the major facilitator superfamily. DHA1 family. Polyamines/proton antiporter (TC 2.A.1.2.16) subfamily.

The protein resides in the peroxisome membrane. Functionally, MFS-type transporter involved in penicillin production, most likely through the translocation of side-chain precursors (phenylacetic acid and phenoxyacetic acid) from the cytosol to the peroxisomal lumen across the peroxisomal membrane. This is MFS-rype transporter paaT from Penicillium rubens (strain ATCC 28089 / DSM 1075 / NRRL 1951 / Wisconsin 54-1255) (Penicillium chrysogenum).